Reading from the N-terminus, the 201-residue chain is Desiccation-related protein PCC3-06 (201 aa).

Over residues 41 to 54 (TVASQSQGRQQVSE) the composition is skewed to polar residues. Disordered regions lie at residues 41–155 (TVAS…QNVK) and 177–201 (MGKS…TNYF). Composition is skewed to basic and acidic residues over residues 57 to 76 (EDAK…KTSE), 108 to 144 (GELK…ERVA), and 177 to 193 (MGKS…ETKK).

It belongs to the LEA type 1 family.

The protein is Desiccation-related protein PCC3-06 of Craterostigma plantagineum (Blue gem).